A 556-amino-acid chain; its full sequence is GDP-Man:Man(3)GlcNAc(2)-PP-Dol alpha-1,2-mannosyltransferase (556 aa).

Over 1–7 the chain is Lumenal; the sequence is MANGLFT. Residues 8–28 form a helical membrane-spanning segment; sequence YVAISLFTIGPLLALFIPFVW. Residues 29-184 lie on the Cytoplasmic side of the membrane; sequence RLVGSSLGWY…RWVLASTWPY (156 aa). A compositionally biased stretch (basic and acidic residues) spans 64–79; it reads SKSAKGRKAEKEDRDT. The tract at residues 64–86 is disordered; sequence SKSAKGRKAEKEDRDTFNNTEAT. The segment at residues 185–205 is an intramembrane region (helical); that stretch reads FTLAGQSFGSLIMAWDAFSLL. Topologically, residues 206–454 are cytoplasmic; sequence VPDIFVDTMG…VGVNGMWNEH (249 aa). Positions 455 to 475 form an intramembrane region, helical; it reads FGIGVVEYQAAGLISVVHDSG. Residues 476 to 556 lie on the Cytoplasmic side of the membrane; sequence GPKLDIVVEV…KAVEKPKSRQ (81 aa).

The protein belongs to the glycosyltransferase group 1 family. Glycosyltransferase 4 subfamily.

The protein resides in the endoplasmic reticulum membrane. The enzyme catalyses an alpha-D-Man-(1-&gt;3)-[alpha-D-Man-(1-&gt;6)]-beta-D-Man-(1-&gt;4)-beta-D-GlcNAc-(1-&gt;4)-alpha-D-GlcNAc-diphospho-di-trans,poly-cis-dolichol + 2 GDP-alpha-D-mannose = an alpha-D-Man-(1-&gt;2)-alpha-D-Man-(1-&gt;2)-alpha-D-Man-(1-&gt;3)-[alpha-D-Man-(1-&gt;6)]-beta-D-Man-(1-&gt;4)-beta-D-GlcNAc-(1-&gt;4)-alpha-D-GlcNAc-diphospho-di-trans,poly-cis-dolichol + 2 GDP + 2 H(+). It participates in protein modification; protein glycosylation. Functionally, GDP-Man:Man(3)GlcNAc(2)-PP-Dol alpha-1,2-mannosyltransferase that operates in the biosynthetic pathway of dolichol-linked oligosaccharides, the glycan precursors employed in protein asparagine (N)-glycosylation. The assembly of dolichol-linked oligosaccharides begins on the cytosolic side of the endoplasmic reticulum membrane and finishes in its lumen. The sequential addition of sugars to dolichol pyrophosphate produces dolichol-linked oligosaccharides containing fourteen sugars, including two GlcNAcs, nine mannoses and three glucoses. Once assembled, the oligosaccharide is transferred from the lipid to nascent proteins by oligosaccharyltransferases. Catalyzes, on the cytoplasmic face of the endoplasmic reticulum, the addition of the fourth and fifth mannose residues to the dolichol-linked oligosaccharide chain, to produce Man(5)GlcNAc(2)-PP-dolichol core oligosaccharide. In Neurospora crassa (strain ATCC 24698 / 74-OR23-1A / CBS 708.71 / DSM 1257 / FGSC 987), this protein is GDP-Man:Man(3)GlcNAc(2)-PP-Dol alpha-1,2-mannosyltransferase (alg-11).